Reading from the N-terminus, the 319-residue chain is D-alanine--D-alanine ligase (319 aa).

Residues 120–315 enclose the ATP-grasp domain; that stretch reads KRVLAQAGVP…YPELLRRLVE (196 aa). 147–198 provides a ligand contact to ATP; it reads DPPFFVKPANTGSSVGISRVERFQDLEAALALAFRYDEKAVVEKALSPVREL. 3 residues coordinate Mg(2+): D270, E282, and N284.

This sequence belongs to the D-alanine--D-alanine ligase family. The cofactor is Mg(2+). It depends on Mn(2+) as a cofactor.

It localises to the cytoplasm. The enzyme catalyses 2 D-alanine + ATP = D-alanyl-D-alanine + ADP + phosphate + H(+). It functions in the pathway cell wall biogenesis; peptidoglycan biosynthesis. Cell wall formation. The sequence is that of D-alanine--D-alanine ligase from Thermus thermophilus (strain ATCC 27634 / DSM 579 / HB8).